Reading from the N-terminus, the 158-residue chain is S-ribosylhomocysteine lyase (158 aa).

Fe cation-binding residues include H54, H58, and C124.

This sequence belongs to the LuxS family. As to quaternary structure, homodimer. Requires Fe cation as cofactor.

It catalyses the reaction S-(5-deoxy-D-ribos-5-yl)-L-homocysteine = (S)-4,5-dihydroxypentane-2,3-dione + L-homocysteine. In terms of biological role, involved in the synthesis of autoinducer 2 (AI-2) which is secreted by bacteria and is used to communicate both the cell density and the metabolic potential of the environment. The regulation of gene expression in response to changes in cell density is called quorum sensing. Catalyzes the transformation of S-ribosylhomocysteine (RHC) to homocysteine (HC) and 4,5-dihydroxy-2,3-pentadione (DPD). In Limosilactobacillus reuteri (Lactobacillus reuteri), this protein is S-ribosylhomocysteine lyase.